Here is a 524-residue protein sequence, read N- to C-terminus: Cytochrome P450 monooxygenase patH (524 aa).

Topologically, residues 1–4 (MEPM) are cytoplasmic. A helical membrane pass occupies residues 5–23 (LLLILVAAVVLLFVRWAFV). Residues 24-524 (YGHRTSNMPK…KEVFSQFTEG (501 aa)) are Lumenal-facing. Asn191 carries N-linked (GlcNAc...) asparagine glycosylation. Residue Cys442 participates in heme binding. Asn499 carries an N-linked (GlcNAc...) asparagine glycan.

This sequence belongs to the cytochrome P450 family. Heme is required as a cofactor.

It localises to the endoplasmic reticulum membrane. The enzyme catalyses 3-methylphenol + reduced [NADPH--hemoprotein reductase] + O2 = 3-hydroxybenzyl alcohol + oxidized [NADPH--hemoprotein reductase] + H2O + H(+). Its pathway is mycotoxin biosynthesis; patulin biosynthesis. Cytochrome P450 monooxygenase; part of the gene cluster that mediates the biosynthesis of patulin, an acetate-derived tetraketide mycotoxin produced by several fungal species that shows antimicrobial properties against several bacteria. PatH catalyzes the conversion of m-cresol into m-hydroxybenzyl alcohol. The pathway begins with the synthesis of 6-methylsalicylic acid by the polyketide synthase (PKS) patK via condensation of acetate and malonate units. The 6-methylsalicylic acid decarboxylase patG then catalyzes the decarboxylation of 6-methylsalicylic acid to yield m-cresol (also known as 3-methylphenol). These first reactions occur in the cytosol. The intermediate m-cresol is then transported into the endoplasmic reticulum where the cytochrome P450 monooxygenase patH converts it to m-hydroxybenzyl alcohol, which is further converted to gentisyl alcohol by the cytochrome P450 monooxygenase patI. The oxidoreductases patJ and patO further convert gentisyl alcohol to isoepoxydon in the vacuole. PatN catalyzes then the transformation of isoepoxydon into phyllostine. The cluster protein patF is responsible for the conversion from phyllostine to neopatulin whereas the alcohol dehydrogenase patD converts neopatulin to E-ascladiol. The steps between isoepoxydon and E-ascladiol occur in the cytosol, and E-ascladiol is probably secreted to the extracellular space by one of the cluster-specific transporters patC or patM. Finally, the secreted patulin synthase patE catalyzes the conversion of E-ascladiol to patulin. The chain is Cytochrome P450 monooxygenase patH from Aspergillus clavatus (strain ATCC 1007 / CBS 513.65 / DSM 816 / NCTC 3887 / NRRL 1 / QM 1276 / 107).